The sequence spans 277 residues: Putative thiosulfate sulfurtransferase (277 aa).

Rhodanese domains lie at 18–125 (DSAN…PLST) and 154–274 (SIKI…VPIE). Catalysis depends on Cys-233, which acts as the Cysteine persulfide intermediate. Arg-238 serves as a coordination point for substrate.

It carries out the reaction thiosulfate + hydrogen cyanide = thiocyanate + sulfite + 2 H(+). Its function is as follows. May be a sulfotransferase involved in the formation of thiosulfate. In Mycobacterium leprae (strain TN), this protein is Putative thiosulfate sulfurtransferase (cysA).